A 162-amino-acid polypeptide reads, in one-letter code: Large ribosomal subunit protein uL30 (162 aa).

The protein belongs to the universal ribosomal protein uL30 family. In terms of assembly, part of the 50S ribosomal subunit.

This Desulfurococcus amylolyticus (strain DSM 18924 / JCM 16383 / VKM B-2413 / 1221n) (Desulfurococcus kamchatkensis) protein is Large ribosomal subunit protein uL30.